The following is a 251-amino-acid chain: Flap endonuclease Xni (251 aa).

Aspartate 104 provides a ligand contact to Mg(2+). The 5'-3' exonuclease domain maps to 160-249 (VLPRQLPDYW…IDGNLQQLRL (90 aa)). Positions 171, 172, 180, 182, and 185 each coordinate K(+). An interaction with DNA region spans residues 184-189 (GIGPKS).

Belongs to the Xni family. Mg(2+) is required as a cofactor. Requires K(+) as cofactor.

Its function is as follows. Has flap endonuclease activity. During DNA replication, flap endonucleases cleave the 5'-overhanging flap structure that is generated by displacement synthesis when DNA polymerase encounters the 5'-end of a downstream Okazaki fragment. The protein is Flap endonuclease Xni of Salmonella newport (strain SL254).